Here is a 146-residue protein sequence, read N- to C-terminus: Hemoglobin subunit beta (146 aa).

The Globin domain occupies 2 to 146 (HWTAEEKQLI…VAHALARKYH (145 aa)). His-63 and His-92 together coordinate heme b.

The protein belongs to the globin family. Heterotetramer of two alpha chains and two beta chains. As to expression, red blood cells.

Functionally, involved in oxygen transport from the lung to the various peripheral tissues. The sequence is that of Hemoglobin subunit beta (HBB) from Phalacrocorax carbo (Great cormorant).